Reading from the N-terminus, the 438-residue chain is Beta-1,3-galactosyl-O-glycosyl-glycoprotein beta-1,6-N-acetylglucosaminyltransferase 3 (438 aa).

Residues Met1–Arg6 are Cytoplasmic-facing. Residues Leu7–Ala26 traverse the membrane as a helical; Signal-anchor for type II membrane protein segment. The Lumenal segment spans residues Leu27–Leu438. Intrachain disulfides connect Cys70/Cys227, Cys161/Cys382, Cys182/Cys209, and Cys391/Cys423. An N-linked (GlcNAc...) asparagine glycan is attached at Asn289.

Belongs to the glycosyltransferase 14 family. In terms of processing, N-glycosylated. Primarily expressed in mucus-secreting tissues. Expressed in colon, kidney, small intestine, trachea, and stomach, where mucin is produced.

The protein resides in the golgi apparatus membrane. It carries out the reaction a 3-O-[beta-D-galactosyl-(1-&gt;3)-N-acetyl-alpha-D-galactosaminyl]-L-seryl-[protein] + UDP-N-acetyl-alpha-D-glucosamine = 3-O-{beta-D-galactosyl-(1-&gt;3)-[N-acetyl-beta-D-glucosaminyl-(1-&gt;6)]-N-acetyl-alpha-D-galactosaminyl}-L-seryl-[protein] + UDP + H(+). It catalyses the reaction a 3-O-[beta-D-galactosyl-(1-&gt;3)-N-acetyl-alpha-D-galactosaminyl]-L-threonyl-[protein] + UDP-N-acetyl-alpha-D-glucosamine = a 3-O-{beta-D-galactosyl-(1-&gt;3)-[N-acetyl-beta-D-glucosaminyl-(1-&gt;6)]-N-acetyl-alpha-D-galactosaminyl}-L-threonyl-[protein] + UDP + H(+). The catalysed reaction is a beta-D-Gal-(1-&gt;4)-beta-D-GlcNAc-(1-&gt;3)-beta-D-Gal-(1-&gt;4)-beta-D-GlcNAc derivative + UDP-N-acetyl-alpha-D-glucosamine = a beta-D-Gal-(1-&gt;4)-beta-D-GlcNAc-(1-&gt;3)-[beta-D-GlcNAc-(1-&gt;6)]-beta-D-Gal-(1-&gt;4)-N-acetyl-beta-D-glucosaminyl derivative + UDP + H(+). The enzyme catalyses 3-O-[N-acetyl-beta-D-glucosaminyl-(1-&gt;3)-N-acetyl-alpha-D-galactosaminyl]-L-seryl-[protein] + UDP-N-acetyl-alpha-D-glucosamine = 3-O-[N-acetyl-beta-D-glucosaminyl-(1-&gt;3)-[N-acetyl-beta-D-glucosaminyl-(1-&gt;6)]-N-acetyl-alpha-D-galactosaminyl]-L-seryl-[protein] + UDP + H(+). It carries out the reaction a 3-O-[N-acetyl-beta-D-glucosaminyl-(1-&gt;3)-N-acetyl-alpha-D-galactosaminyl]-L-threonyl-[protein] + UDP-N-acetyl-alpha-D-glucosamine = 3-O-[N-acetyl-beta-D-glucosaminyl-(1-&gt;3)-[N-acetyl-beta-D-glucosaminyl-(1-&gt;6)]-N-acetyl-alpha-D-galactosaminyl]-L-threonyl-[protein] + UDP + H(+). The protein operates within protein modification; protein glycosylation. Functionally, glycosyltransferase that can synthesize all known mucin beta 6 N-acetylglucosaminides. Mediates core 2 and core 4 O-glycan branching, 2 important steps in mucin-type biosynthesis. Also has I-branching enzyme activity by converting linear into branched poly-N-acetyllactosaminoglycans, leading to introduce the blood group I antigen during embryonic development. This chain is Beta-1,3-galactosyl-O-glycosyl-glycoprotein beta-1,6-N-acetylglucosaminyltransferase 3 (GCNT3), found in Homo sapiens (Human).